Reading from the N-terminus, the 362-residue chain is 3-dehydroquinate synthase (362 aa).

Residues 71 to 76 (DGEQYK), 105 to 109 (GVVGD), 129 to 130 (TT), Lys142, Lys151, and 169 to 172 (CLKT) contribute to the NAD(+) site. Glu184, His247, and His264 together coordinate Zn(2+).

The protein belongs to the sugar phosphate cyclases superfamily. Dehydroquinate synthase family. Requires Co(2+) as cofactor. Zn(2+) serves as cofactor. NAD(+) is required as a cofactor.

The protein resides in the cytoplasm. The enzyme catalyses 7-phospho-2-dehydro-3-deoxy-D-arabino-heptonate = 3-dehydroquinate + phosphate. It functions in the pathway metabolic intermediate biosynthesis; chorismate biosynthesis; chorismate from D-erythrose 4-phosphate and phosphoenolpyruvate: step 2/7. Functionally, catalyzes the conversion of 3-deoxy-D-arabino-heptulosonate 7-phosphate (DAHP) to dehydroquinate (DHQ). This Escherichia coli O81 (strain ED1a) protein is 3-dehydroquinate synthase.